Here is a 107-residue protein sequence, read N- to C-terminus: Nucleoid-associated protein Mmar10_0436 (107 aa).

The protein belongs to the YbaB/EbfC family. As to quaternary structure, homodimer.

It localises to the cytoplasm. It is found in the nucleoid. Binds to DNA and alters its conformation. May be involved in regulation of gene expression, nucleoid organization and DNA protection. The chain is Nucleoid-associated protein Mmar10_0436 from Maricaulis maris (strain MCS10) (Caulobacter maris).